The following is a 68-amino-acid chain: MEC1-mediated checkpoint protein HUG1 (68 aa).

It is found in the cytoplasm. It localises to the nucleus. Involved in the MEC1-mediated checkpoint response to DNA damage and replication arrest. The protein is MEC1-mediated checkpoint protein HUG1 (HUG1) of Saccharomyces cerevisiae (strain ATCC 204508 / S288c) (Baker's yeast).